Here is a 264-residue protein sequence, read N- to C-terminus: Pyridoxine 5'-phosphate synthase (264 aa).

Positions 1–21 are enriched in polar residues; the sequence is MTDTAQILPTTLEQNPQNTSK. The segment at 1–22 is disordered; that stretch reads MTDTAQILPTTLEQNPQNTSKK. Asn-28 is a binding site for 3-amino-2-oxopropyl phosphate. Position 30 to 31 (30 to 31) interacts with 1-deoxy-D-xylulose 5-phosphate; the sequence is DH. Arg-39 provides a ligand contact to 3-amino-2-oxopropyl phosphate. The Proton acceptor role is filled by His-64. Residues Arg-66 and His-71 each contribute to the 1-deoxy-D-xylulose 5-phosphate site. The active-site Proton acceptor is Glu-91. Thr-121 serves as a coordination point for 1-deoxy-D-xylulose 5-phosphate. His-217 functions as the Proton donor in the catalytic mechanism. Residues Gly-218 and 239 to 240 contribute to the 3-amino-2-oxopropyl phosphate site; that span reads GH.

Belongs to the PNP synthase family. Homooctamer; tetramer of dimers.

It localises to the cytoplasm. It carries out the reaction 3-amino-2-oxopropyl phosphate + 1-deoxy-D-xylulose 5-phosphate = pyridoxine 5'-phosphate + phosphate + 2 H2O + H(+). It functions in the pathway cofactor biosynthesis; pyridoxine 5'-phosphate biosynthesis; pyridoxine 5'-phosphate from D-erythrose 4-phosphate: step 5/5. Its function is as follows. Catalyzes the complicated ring closure reaction between the two acyclic compounds 1-deoxy-D-xylulose-5-phosphate (DXP) and 3-amino-2-oxopropyl phosphate (1-amino-acetone-3-phosphate or AAP) to form pyridoxine 5'-phosphate (PNP) and inorganic phosphate. The polypeptide is Pyridoxine 5'-phosphate synthase (Psychrobacter cryohalolentis (strain ATCC BAA-1226 / DSM 17306 / VKM B-2378 / K5)).